A 309-amino-acid chain; its full sequence is Tagatose-6-phosphate kinase (309 aa).

It belongs to the carbohydrate kinase PfkB family. LacC subfamily.

The catalysed reaction is D-tagatofuranose 6-phosphate + ATP = D-tagatofuranose 1,6-bisphosphate + ADP + H(+). It functions in the pathway carbohydrate metabolism; D-tagatose 6-phosphate degradation; D-glyceraldehyde 3-phosphate and glycerone phosphate from D-tagatose 6-phosphate: step 1/2. The protein is Tagatose-6-phosphate kinase of Streptococcus pyogenes serotype M4 (strain MGAS10750).